The chain runs to 1077 residues: Ubiquitin-activating enzyme E1 2 (1077 aa).

Residues 16–36 are disordered; the sequence is SPMKKRRIDHTESADGSAINA. Residues alanine 499, aspartate 525, arginine 536, lysine 549, and 597–598 contribute to the ATP site; that span reads DN. The active-site Glycyl thioester intermediate is cysteine 653.

This sequence belongs to the ubiquitin-activating E1 family. As to quaternary structure, monomer. Expressed in leaves, flowers, roots and stems. Detected in germinating seeds, cotyledons, hypocotyls, vascular tissues, anthers, filaments, pollen, style, stigma, sepals, petals, ovary, developing ovules, funiculi and silique walls.

The enzyme catalyses ATP + ubiquitin + [E1 ubiquitin-activating enzyme]-L-cysteine = AMP + diphosphate + S-ubiquitinyl-[E1 ubiquitin-activating enzyme]-L-cysteine.. It functions in the pathway protein modification; protein ubiquitination. In terms of biological role, activates ubiquitin by first adenylating its C-terminal glycine residue with ATP, and thereafter linking this residue to the side chain of a cysteine residue in E1, yielding a ubiquitin-E1 thioester and free AMP. The sequence is that of Ubiquitin-activating enzyme E1 2 (UBA2) from Arabidopsis thaliana (Mouse-ear cress).